Here is a 119-residue protein sequence, read N- to C-terminus: MGIMHTSELLKHIYDINLSYLLLAQRLIVQDKASAMFRLGINEEMATTLAALTLPQMVKLAETNQLVCHFRFDSHQTITQLTQDSRVDDLQQIHTGIMLSTRLLNDVNQPEEALRKKRA.

The protein belongs to the FlhD family. In terms of assembly, homodimer; disulfide-linked. Forms a heterohexamer composed of two FlhC and four FlhD subunits. Each FlhC binds a FlhD dimer, forming a heterotrimer, and a hexamer assembles by dimerization of two heterotrimers.

The protein localises to the cytoplasm. In terms of biological role, functions in complex with FlhC as a master transcriptional regulator that regulates transcription of several flagellar and non-flagellar operons by binding to their promoter region. Activates expression of class 2 flagellar genes, including fliA, which is a flagellum-specific sigma factor that turns on the class 3 genes. Also regulates genes whose products function in a variety of physiological pathways. This Shigella dysenteriae serotype 1 (strain Sd197) protein is Flagellar transcriptional regulator FlhD.